The chain runs to 68 residues: Probable tautomerase jhp_0858 (68 aa).

The active-site Proton acceptor; via imino nitrogen is proline 2.

This sequence belongs to the 4-oxalocrotonate tautomerase family.

In Helicobacter pylori (strain J99 / ATCC 700824) (Campylobacter pylori J99), this protein is Probable tautomerase jhp_0858.